A 76-amino-acid polypeptide reads, in one-letter code: Defensin-like protein 5 (76 aa).

Positions 1-29 are cleaved as a signal peptide; sequence MKVSPRLNSALLLLFMILATVMGLVTVEA. 4 cysteine pairs are disulfide-bonded: C32/C76, C43/C63, C49/C70, and C53/C72.

It belongs to the DEFL family.

The protein localises to the secreted. In terms of biological role, confers broad-spectrum resistance to pathogens. The protein is Defensin-like protein 5 (PDF2.4) of Arabidopsis thaliana (Mouse-ear cress).